A 529-amino-acid polypeptide reads, in one-letter code: uncharacterized protein (529 aa).

ABC transporter domains lie at 6 to 257 (LAIE…QKLL) and 287 to 526 (IRKG…RQLL). ATP-binding positions include 42-49 (GESGSGKS) and 319-326 (GESGSGKS).

The protein belongs to the ABC transporter superfamily.

This is an uncharacterized protein from Escherichia coli (strain K12).